A 198-amino-acid chain; its full sequence is Recombination protein RecR (198 aa).

A C4-type zinc finger spans residues 57 to 72 (CSVCGNLTDEDPCSIC). In terms of domain architecture, Toprim spans 80–175 (SMILVVEDSK…KVTRLARGLA (96 aa)).

It belongs to the RecR family.

Its function is as follows. May play a role in DNA repair. It seems to be involved in an RecBC-independent recombinational process of DNA repair. It may act with RecF and RecO. The protein is Recombination protein RecR of Streptococcus uberis (strain ATCC BAA-854 / 0140J).